A 259-amino-acid chain; its full sequence is Eukaryotic translation initiation factor 3 subunit J (259 aa).

Low complexity predominate over residues 1–12 (MAAAAAAAAGDS). The sufficient for interaction with EIF3B stretch occupies residues 1–70 (MAAAAAAAAG…KEEAEVKPEV (70 aa)). The disordered stretch occupies residues 1 to 111 (MAAAAAAAAG…EPEEPKVLTP (111 aa)). Residues S12, S14, and S21 each carry the phosphoserine modification. Positions 41 to 60 (EGEDEDEDVKDNWDDDDDEK) are enriched in acidic residues. Basic and acidic residues predominate over residues 61-107 (KEEAEVKPEVKISEKKKIAEKIKEKERQQKKRQEEIKKRLEEPEEPK). A coiled-coil region spans residues 71–136 (KISEKKKIAE…ESDLELAKET (66 aa)). A Glycyl lysine isopeptide (Lys-Gly) (interchain with G-Cter in SUMO2) cross-link involves residue K107. A Phosphothreonine modification is found at T110. Position 128 is a phosphoserine (S128). The interval 218–247 (SKAKKKKKGVVPGGGLKATMKDDLADYGGY) is disordered. The promotes stable association with the 40S ribosome stretch occupies residues 244-259 (YGGYDGGYVQDYEDFM). Y255 is subject to Phosphotyrosine.

The protein belongs to the eIF-3 subunit J family. Component of the eukaryotic translation initiation factor 3 (eIF-3) complex, which is composed of 13 subunits: EIF3A, EIF3B, EIF3C, EIF3D, EIF3E, EIF3F, EIF3G, EIF3H, EIF3I, EIF3J, EIF3K, EIF3L and EIF3M. The eIF-3 complex appears to include 3 stable modules: module A is composed of EIF3A, EIF3B, EIF3G and EIF3I; module B is composed of EIF3F, EIF3H, and EIF3M; and module C is composed of EIF3C, EIF3D, EIF3E, EIF3K and EIF3L. EIF3C of module C binds EIF3B of module A and EIF3H of module B, thereby linking the three modules. EIF3J is a labile subunit that binds to the eIF-3 complex via EIF3B. The eIF-3 complex interacts with RPS6KB1 under conditions of nutrient depletion. Mitogenic stimulation leads to binding and activation of a complex composed of MTOR and RPTOR, leading to phosphorylation and release of RPS6KB1 and binding of EIF4B to eIF-3. Phosphorylated. Phosphorylation is enhanced upon serum stimulation.

The protein localises to the cytoplasm. In terms of biological role, component of the eukaryotic translation initiation factor 3 (eIF-3) complex, which is required for several steps in the initiation of protein synthesis. The eIF-3 complex associates with the 40S ribosome and facilitates the recruitment of eIF-1, eIF-1A, eIF-2:GTP:methionyl-tRNAi and eIF-5 to form the 43S pre-initiation complex (43S PIC). The eIF-3 complex stimulates mRNA recruitment to the 43S PIC and scanning of the mRNA for AUG recognition. The eIF-3 complex is also required for disassembly and recycling of post-termination ribosomal complexes and subsequently prevents premature joining of the 40S and 60S ribosomal subunits prior to initiation. The eIF-3 complex specifically targets and initiates translation of a subset of mRNAs involved in cell proliferation, including cell cycling, differentiation and apoptosis, and uses different modes of RNA stem-loop binding to exert either translational activation or repression. This subunit binds directly within the mRNA entry channel of the 40S ribosome to the aminoacyl (A) site. It may regulate the interaction between the 43S PIC and mRNA. This Pongo abelii (Sumatran orangutan) protein is Eukaryotic translation initiation factor 3 subunit J.